The sequence spans 229 residues: Cytidylate kinase (229 aa).

10-18 (GYSSCGKST) is an ATP binding site.

The protein belongs to the cytidylate kinase family. Type 1 subfamily.

It is found in the cytoplasm. It catalyses the reaction CMP + ATP = CDP + ADP. The catalysed reaction is dCMP + ATP = dCDP + ADP. This chain is Cytidylate kinase, found in Phocaeicola vulgatus (strain ATCC 8482 / DSM 1447 / JCM 5826 / CCUG 4940 / NBRC 14291 / NCTC 11154) (Bacteroides vulgatus).